The sequence spans 422 residues: 5'-deoxyadenosine deaminase (422 aa).

2 residues coordinate Zn(2+): His-57 and His-59. The substrate site is built by Glu-86 and His-178. His-205 is a binding site for Zn(2+). Substrate contacts are provided by Glu-208 and Asp-294. Asp-294 is a Zn(2+) binding site.

Belongs to the metallo-dependent hydrolases superfamily. MTA/SAH deaminase family. In terms of assembly, homotetramer. Zn(2+) serves as cofactor.

It carries out the reaction 5'-deoxyadenosine + H2O + H(+) = 5'-deoxyinosine + NH4(+). The enzyme catalyses S-adenosyl-L-homocysteine + H2O + H(+) = S-inosyl-L-homocysteine + NH4(+). The catalysed reaction is S-methyl-5'-thioadenosine + H2O + H(+) = S-methyl-5'-thioinosine + NH4(+). It catalyses the reaction adenosine + H2O + H(+) = inosine + NH4(+). Its pathway is amino-acid biosynthesis; S-adenosyl-L-methionine biosynthesis. In terms of biological role, catalyzes the deamination of three SAM-derived enzymatic products, namely 5'-deoxyadenosine, S-adenosyl-L-homocysteine, and 5'-methylthioadenosine, to produce the inosine analogs. Can also deaminate adenosine. The preferred substrate for this enzyme is 5'-deoxyadenosine, but all these substrates are efficiently deaminated. Likely functions in a S-adenosyl-L-methionine (SAM) recycling pathway from S-adenosyl-L-homocysteine (SAH) produced from SAM-dependent methylation reactions. May also be involved in the recycling of 5'-deoxyadenosine, whereupon the 5'-deoxyribose moiety of 5'-deoxyinosine is further metabolized to deoxyhexoses used for the biosynthesis of aromatic amino acids in methanogens. In Methanococcus vannielii (strain ATCC 35089 / DSM 1224 / JCM 13029 / OCM 148 / SB), this protein is 5'-deoxyadenosine deaminase.